Reading from the N-terminus, the 530-residue chain is Type II methyltransferase M.MjaII (530 aa).

The protein belongs to the N(4)/N(6)-methyltransferase family. N(4) subfamily.

It catalyses the reaction a 2'-deoxycytidine in DNA + S-adenosyl-L-methionine = an N(4)-methyl-2'-deoxycytidine in DNA + S-adenosyl-L-homocysteine + H(+). An alpha subtype methylase that recognizes the double-stranded sequence 5'-GGNCC-3', methylates C-5 on both strands, and protects the DNA from cleavage by the MjaII endonuclease. In Methanocaldococcus jannaschii (strain ATCC 43067 / DSM 2661 / JAL-1 / JCM 10045 / NBRC 100440) (Methanococcus jannaschii), this protein is Type II methyltransferase M.MjaII (mjaIIM).